A 275-amino-acid polypeptide reads, in one-letter code: HUWE1-associated protein modifying stress responses (275 aa).

The segment covering 32–44 has biased composition (acidic residues); it reads AEQDEQLSPELQE. Disordered stretches follow at residues 32–51, 155–181, 204–228, and 250–275; these read AEQD…AAAQ, RNSR…SSVE, SVRS…RRNG, and GTRK…NRML. S167 is subject to Phosphoserine. The span at 172 to 181 shows a compositional bias: low complexity; it reads TSTETSSSVE. Over residues 204 to 221 the composition is skewed to polar residues; sequence SVRSSTPGSPTHVSSGPN. S212 is subject to Phosphoserine.

The protein belongs to the HAPSTR1 family. In terms of assembly, homooligomer. Heterooligomer with HAPSTR2; the interaction is direct and stabilizes HAPSTR1. Interacts with HUWE1. In terms of processing, ubiquitinated by HUWE1. Promotes HAPSTR1 degradation through polyubiquitination.

It is found in the nucleus. It localises to the cytoplasm. In terms of biological role, acts as a central player within a network of stress response pathways promoting cellular adaptability. The E3 ligase HUWE1 assists HAPSTR1 in controlling stress signaling and in turn, HUWE1 feeds back to promote the degradation of HAPSTR1. HAPSTR1 represents a central coordination mechanism for stress response programs. Functions as a negative regulator of TP53/P53 in the cellular response to telomere erosion and probably also DNA damage. May attenuate p53/TP53 activation through the E3 ubiquitin ligase HUWE1. This Mus musculus (Mouse) protein is HUWE1-associated protein modifying stress responses.